The chain runs to 354 residues: Uroporphyrinogen decarboxylase (354 aa).

Substrate contacts are provided by residues 27–31 (RQAGR), Asp77, Tyr154, Thr209, and His327.

The protein belongs to the uroporphyrinogen decarboxylase family. In terms of assembly, homodimer.

Its subcellular location is the cytoplasm. The enzyme catalyses uroporphyrinogen III + 4 H(+) = coproporphyrinogen III + 4 CO2. It participates in porphyrin-containing compound metabolism; protoporphyrin-IX biosynthesis; coproporphyrinogen-III from 5-aminolevulinate: step 4/4. In terms of biological role, catalyzes the decarboxylation of four acetate groups of uroporphyrinogen-III to yield coproporphyrinogen-III. The chain is Uroporphyrinogen decarboxylase from Salmonella schwarzengrund (strain CVM19633).